We begin with the raw amino-acid sequence, 454 residues long: Chromosomal replication initiator protein DnaA (454 aa).

Residues 1 to 74 are domain I, interacts with DnaA modulators; that stretch reads MFDLDKFWQF…IQEAYAYADM (74 aa). The domain II stretch occupies residues 74–116; that stretch reads MEIQPKFEVAGKEGPERLVTPQPRIKTNQEILENRRDEFAQDL. The tract at residues 117 to 333 is domain III, AAA+ region; it reads QLNSKYTFDT…GALVKVQAHA (217 aa). ATP-binding residues include Gly-161, Gly-163, Lys-164, and Thr-165. The domain IV, binds dsDNA stretch occupies residues 334–454; sequence TIEREDINVD…VYDLKAMLEH (121 aa).

It belongs to the DnaA family. As to quaternary structure, oligomerizes as a right-handed, spiral filament on DNA at oriC.

Its subcellular location is the cytoplasm. In terms of biological role, plays an essential role in the initiation and regulation of chromosomal replication. ATP-DnaA binds to the origin of replication (oriC) to initiate formation of the DNA replication initiation complex once per cell cycle. Binds the DnaA box (a 9 base pair repeat at the origin) and separates the double-stranded (ds)DNA. Forms a right-handed helical filament on oriC DNA; dsDNA binds to the exterior of the filament while single-stranded (ss)DNA is stabiized in the filament's interior. The ATP-DnaA-oriC complex binds and stabilizes one strand of the AT-rich DNA unwinding element (DUE), permitting loading of DNA polymerase. After initiation quickly degrades to an ADP-DnaA complex that is not apt for DNA replication. Binds acidic phospholipids. This is Chromosomal replication initiator protein DnaA from Lactobacillus johnsonii (strain CNCM I-12250 / La1 / NCC 533).